Here is an 845-residue protein sequence, read N- to C-terminus: MSKLQQFPLSKGWSFRDNEATSEDAWMPVPVVPSVVHQDLQANNKLKDPYIGFNELEARWVNEKSWTYKTVFQKPAAPAGSCIVLAFDGLDTFAKVKLDGNVILENDNMFLARRVDVTKALEAEGDHVLEIDFDCAFLRAKELRKQDPRHNWASFNGDPSRLSVRKAQYHWGWDWGPVLMTAGIWREVRLEVYSARVADLWTEVQLASDHQSAQVTAFVEVESVHSGSHRACFTLSLHGQEITREEIGVTENGTAKATFDVKEPSLWWPHGYGDATLYEVSVSLVKEQEELHRVSKKFGIRTAEVIQRPDKHGKSFFFRVNGVDIFCGGSCWIPADNLLPSITAERYRKWIELMVHGRQVMIRVWGGGIYEDYSFYDACDELGVLVWQDFMFGCGNYPTWPNLLESIRKESVYNVRRLRHHPSIVIWVGNNEDYQVQEQAGLTYNYEDKDPENWLKTDFPARYIYEKLLPEVVQEYSPGTFYHPGSPWGDGKTTSDPTVGDMHQWNVWHGTQEKYQIFDTLGGRFNSEFGMEAFPHMSTIDYFVENEADKYPQSHVLDFHNKADGHERRIATYLVENLRTATDLETHIYLTQVVQAETMMFGYRGWRRQWGDERHCGGALLWQLNDCWPTISWAIVDYFLRPKPAFYAVARVLNPIAVGVRREHHDWSVTHAQPPKTSKFELWVASSRQQEIQGTVELRFLSVNTGLEVRERIVHENVSIVPNGTTNLIVDGLIDHTVHSEPHVLAARIWVDGQLVARDVDWPQPFKYLDLSDRGLEVKKISESEDEQTLLISTKKPVKCLVFEEREGVRISDSAMDIVPGDDQRVTIKGLKPGDAPLKYKFLGQ.

The N-linked (GlcNAc...) asparagine glycan is linked to Asn252. Glu432 acts as the Proton donor in catalysis. Residues Asn717 and Asn723 are each glycosylated (N-linked (GlcNAc...) asparagine).

Belongs to the glycosyl hydrolase 2 family. Beta-mannosidase B subfamily.

It carries out the reaction Hydrolysis of terminal, non-reducing beta-D-mannose residues in beta-D-mannosides.. The protein operates within glycan metabolism; N-glycan degradation. Exoglycosidase that cleaves the single beta-linked mannose residue from the non-reducing end of beta-mannosidic oligosaccharides of various complexity and length. Prefers mannobiose over mannotriose and has no activity against polymeric mannan. Is also severely restricted by galactosyl substitutions at the +1 subsite. The polypeptide is Beta-mannosidase B (mndB) (Aspergillus fumigatus (strain CBS 144.89 / FGSC A1163 / CEA10) (Neosartorya fumigata)).